The primary structure comprises 381 residues: Pre-mRNA-splicing factor cwf28 (381 aa).

Residues 1–21 (MKRKAVLEAFSDSEDEDEKKL) form a disordered region. 2 positions are modified to phosphoserine: S11 and S13. The stretch at 104 to 157 (AADNEIVDWKANNSNEKAQNKIATNKESTDILPEEVQLVLNDLNDDVKSANSAN) forms a coiled coil. Positions 262–381 (LNSQNEHTEV…DRSYRSTRTL (120 aa)) are disordered. A compositionally biased stretch (polar residues) spans 274–285 (KSNSIDNLTPSS). 2 positions are modified to phosphoserine: S275 and S277. Composition is skewed to basic and acidic residues over residues 287–297 (LFRKRSRDNNL), 306–332 (KHLDYNSRNYNKRDRDPDRTKYREYHS), and 362–375 (SDRYTERENPDRSY).

This sequence belongs to the SPP2 family. In terms of assembly, belongs to the 40S cdc5-associated complex (or cwf complex), a spliceosome sub-complex reminiscent of a late-stage spliceosome composed of the U2, U5 and U6 snRNAs and at least brr2, cdc5, cwf2/prp3, cwf3/syf1, cwf4/syf3, cwf5/ecm2, spp42/cwf6, cwf7/spf27, cwf8, cwf9, cwf10, cwf11, cwf12, prp45/cwf13, cwf14, cwf15, cwf16, cwf17, cwf18, cwf19, cwf20, cwf21, cwf22, cwf23, cwf24, cwf25, cwf26, cyp7/cwf27, cwf28, cwf29/ist3, lea1, msl1, prp5/cwf1, prp10, prp12/sap130, prp17, prp22, sap61, sap62, sap114, sap145, slu7, smb1, smd1, smd3, smf1, smg1 and syf2.

The protein localises to the nucleus. Involved in spliceosome maturation and the first step of pre-mRNA splicing. This chain is Pre-mRNA-splicing factor cwf28 (cwf28), found in Schizosaccharomyces pombe (strain 972 / ATCC 24843) (Fission yeast).